The following is a 95-amino-acid chain: Small ribosomal subunit protein bS20 (95 aa).

The tract at residues 1-22 (MANIKSQIKRNRTNENNRLRNK) is disordered. A compositionally biased stretch (basic and acidic residues) spans 12 to 22 (RTNENNRLRNK).

It belongs to the bacterial ribosomal protein bS20 family.

Binds directly to 16S ribosomal RNA. The protein is Small ribosomal subunit protein bS20 of Tropheryma whipplei (strain TW08/27) (Whipple's bacillus).